The sequence spans 296 residues: D-alanine--D-alanine ligase (296 aa).

Residues 103–293 (KEILMHHRMP…FDSFVKRIIE (191 aa)) enclose the ATP-grasp domain. Residue 129–180 (ISFPAAVKPSSGGSSIATFKVKSIQELKHAYEEASKYGEVMIEQWVTGKEIT) participates in ATP binding. Residues Asp-247, Glu-260, and Asn-262 each coordinate Mg(2+).

This sequence belongs to the D-alanine--D-alanine ligase family. Mg(2+) serves as cofactor. Mn(2+) is required as a cofactor.

Its subcellular location is the cytoplasm. It carries out the reaction 2 D-alanine + ATP = D-alanyl-D-alanine + ADP + phosphate + H(+). Its pathway is cell wall biogenesis; peptidoglycan biosynthesis. Cell wall formation. The polypeptide is D-alanine--D-alanine ligase (Francisella tularensis subsp. holarctica (strain LVS)).